Here is a 161-residue protein sequence, read N- to C-terminus: 6,7-dimethyl-8-ribityllumazine synthase (161 aa).

Residues Trp-26, Ser-58–Glu-60, and Val-81–Ile-83 each bind 5-amino-6-(D-ribitylamino)uracil. Gly-86–Thr-87 contributes to the (2S)-2-hydroxy-3-oxobutyl phosphate binding site. His-89 serves as the catalytic Proton donor. Phe-114 contributes to the 5-amino-6-(D-ribitylamino)uracil binding site. Position 128 (Arg-128) interacts with (2S)-2-hydroxy-3-oxobutyl phosphate.

Belongs to the DMRL synthase family.

It catalyses the reaction (2S)-2-hydroxy-3-oxobutyl phosphate + 5-amino-6-(D-ribitylamino)uracil = 6,7-dimethyl-8-(1-D-ribityl)lumazine + phosphate + 2 H2O + H(+). It participates in cofactor biosynthesis; riboflavin biosynthesis; riboflavin from 2-hydroxy-3-oxobutyl phosphate and 5-amino-6-(D-ribitylamino)uracil: step 1/2. Its function is as follows. Catalyzes the formation of 6,7-dimethyl-8-ribityllumazine by condensation of 5-amino-6-(D-ribitylamino)uracil with 3,4-dihydroxy-2-butanone 4-phosphate. This is the penultimate step in the biosynthesis of riboflavin. The chain is 6,7-dimethyl-8-ribityllumazine synthase from Streptomyces coelicolor (strain ATCC BAA-471 / A3(2) / M145).